The sequence spans 276 residues: Large ribosomal subunit protein uL2 (276 aa).

The tract at residues 219-276 (TVRGSVMNPNDHPHGGGEGRAPIGRKSPMSPWGKPTLGYKTRQRNKPSDKYIVRKRKK) is disordered.

Belongs to the universal ribosomal protein uL2 family. As to quaternary structure, part of the 50S ribosomal subunit. Forms a bridge to the 30S subunit in the 70S ribosome.

Functionally, one of the primary rRNA binding proteins. Required for association of the 30S and 50S subunits to form the 70S ribosome, for tRNA binding and peptide bond formation. It has been suggested to have peptidyltransferase activity; this is somewhat controversial. Makes several contacts with the 16S rRNA in the 70S ribosome. This chain is Large ribosomal subunit protein uL2, found in Oceanobacillus iheyensis (strain DSM 14371 / CIP 107618 / JCM 11309 / KCTC 3954 / HTE831).